Reading from the N-terminus, the 701-residue chain is Elongation factor G (701 aa).

One can recognise a tr-type G domain in the interval 8–291; that stretch reads GRYRNIGIVA…AVIDYLPAPT (284 aa). GTP is bound by residues 17–24, 89–93, and 143–146; these read AHVDAGKT, DTPGH, and NKMD.

It belongs to the TRAFAC class translation factor GTPase superfamily. Classic translation factor GTPase family. EF-G/EF-2 subfamily.

It is found in the cytoplasm. In terms of biological role, catalyzes the GTP-dependent ribosomal translocation step during translation elongation. During this step, the ribosome changes from the pre-translocational (PRE) to the post-translocational (POST) state as the newly formed A-site-bound peptidyl-tRNA and P-site-bound deacylated tRNA move to the P and E sites, respectively. Catalyzes the coordinated movement of the two tRNA molecules, the mRNA and conformational changes in the ribosome. In Pseudomonas savastanoi pv. phaseolicola (strain 1448A / Race 6) (Pseudomonas syringae pv. phaseolicola (strain 1448A / Race 6)), this protein is Elongation factor G.